The sequence spans 115 residues: Large ribosomal subunit protein bL19 (115 aa).

The protein belongs to the bacterial ribosomal protein bL19 family.

In terms of biological role, this protein is located at the 30S-50S ribosomal subunit interface and may play a role in the structure and function of the aminoacyl-tRNA binding site. This is Large ribosomal subunit protein bL19 from Lactobacillus delbrueckii subsp. bulgaricus (strain ATCC BAA-365 / Lb-18).